A 168-amino-acid chain; its full sequence is Microtubule-associated protein Jupiter (168 aa).

Residues 1–14 show a composition bias toward polar residues; sequence MISNFDCTDNQASS. The tract at residues 1 to 33 is disordered; it reads MISNFDCTDNQASSKVLRPPGGGSSDIFGSEMP. At Ser-24 the chain carries Phosphoserine. Thr-35 carries the post-translational modification Phosphothreonine. A compositionally biased stretch (basic and acidic residues) spans 76–87; the sequence is RGQKTVDSHSRL. Disordered regions lie at residues 76-106 and 124-168; these read RGQKTVDSHSRLFGEPTRPITPGKNHMKSSI and NGHY…GAGK. Phosphothreonine occurs at positions 92 and 96. Phosphoserine occurs at positions 105, 133, and 144. Residues 131–144 show a composition bias toward low complexity; that stretch reads SGSVSSASSSVSSS. Over residues 145-155 the composition is skewed to polar residues; the sequence is TENLKMNSGSR.

It belongs to the MAP Jupiter family.

It is found in the nucleus. It localises to the cytoplasm. The protein resides in the cytoskeleton. The protein localises to the spindle. Its function is as follows. Binds to all microtubule populations. The chain is Microtubule-associated protein Jupiter from Drosophila simulans (Fruit fly).